A 339-amino-acid chain; its full sequence is Glyceraldehyde-3-phosphate dehydrogenase (339 aa).

NAD(+) contacts are provided by residues 12–13 (RI), Asp-39, Arg-84, and Ser-127. D-glyceraldehyde 3-phosphate-binding positions include 157–159 (SCT), Thr-188, Arg-203, 216–217 (TG), and Arg-239. The Nucleophile role is filled by Cys-158. Asn-320 serves as a coordination point for NAD(+).

Belongs to the glyceraldehyde-3-phosphate dehydrogenase family. Homotetramer.

It localises to the cytoplasm. The enzyme catalyses D-glyceraldehyde 3-phosphate + phosphate + NAD(+) = (2R)-3-phospho-glyceroyl phosphate + NADH + H(+). It functions in the pathway carbohydrate degradation; glycolysis; pyruvate from D-glyceraldehyde 3-phosphate: step 1/5. Its function is as follows. Catalyzes the oxidative phosphorylation of glyceraldehyde 3-phosphate (G3P) to 1,3-bisphosphoglycerate (BPG) using the cofactor NAD. The first reaction step involves the formation of a hemiacetal intermediate between G3P and a cysteine residue, and this hemiacetal intermediate is then oxidized to a thioester, with concomitant reduction of NAD to NADH. The reduced NADH is then exchanged with the second NAD, and the thioester is attacked by a nucleophilic inorganic phosphate to produce BPG. The protein is Glyceraldehyde-3-phosphate dehydrogenase (gapA) of Mycobacterium avium.